The following is a 545-amino-acid chain: ATP synthase subunit alpha (545 aa).

Position 173–180 (173–180 (GDRQTGKS)) interacts with ATP.

Belongs to the ATPase alpha/beta chains family. As to quaternary structure, F-type ATPases have 2 components, CF(1) - the catalytic core - and CF(0) - the membrane proton channel. CF(1) has five subunits: alpha(3), beta(3), gamma(1), delta(1), epsilon(1). CF(0) has three main subunits: a(1), b(2) and c(9-12). The alpha and beta chains form an alternating ring which encloses part of the gamma chain. CF(1) is attached to CF(0) by a central stalk formed by the gamma and epsilon chains, while a peripheral stalk is formed by the delta and b chains.

Its subcellular location is the cell membrane. It catalyses the reaction ATP + H2O + 4 H(+)(in) = ADP + phosphate + 5 H(+)(out). Produces ATP from ADP in the presence of a proton gradient across the membrane. The alpha chain is a regulatory subunit. This chain is ATP synthase subunit alpha, found in Arthrobacter sp. (strain FB24).